Consider the following 465-residue polypeptide: Sodium-dependent phosphate transport protein 1 (465 aa).

Residues Asn-47 and Asn-56 are each glycosylated (N-linked (GlcNAc...) asparagine). 10 helical membrane-spanning segments follow: residues 79–99 (GIIF…VGYI), 109–129 (IGFA…AAAV), 171–191 (MSLS…GIIC), 198–218 (MVFY…FVLY), 255–275 (AMIK…YLWT), 304–324 (LPYL…DFLM), 337–357 (LFTA…LYLS), 363–383 (TITF…GALI), 399–419 (VTTL…GLFL), and 428–448 (FKIF…YLIF).

Belongs to the major facilitator superfamily. Sodium/anion cotransporter family. In terms of assembly, interacts with PDZK1. Kidney cortex and liver.

It localises to the apical cell membrane. The enzyme catalyses 3 Na(+)(out) + phosphate(out) = 3 Na(+)(in) + phosphate(in). It catalyses the reaction urate(out) = urate(in). Functionally, important for the resorption of phosphate by the kidney. May be involved in actively transporting phosphate into cells via Na(+) cotransport in the renal brush border membrane. Plays a role in urate transport in the kidney. The sequence is that of Sodium-dependent phosphate transport protein 1 (SLC17A1) from Oryctolagus cuniculus (Rabbit).